Consider the following 556-residue polypeptide: Cholesterol oxidase (556 aa).

FAD is bound by residues Gly-18, Glu-37, Gly-88, Ala-93, and Val-235. His-471 functions as the Proton acceptor in the catalytic mechanism. Residue Gly-504 participates in FAD binding.

Belongs to the GMC oxidoreductase family. It depends on FAD as a cofactor.

It catalyses the reaction cholesterol + O2 = cholest-5-en-3-one + H2O2. It carries out the reaction cholest-5-en-3-one = cholest-4-en-3-one. The protein operates within steroid metabolism; cholesterol degradation. Functionally, bifunctional enzyme that catalyzes the oxidation and isomerization of cholesterol to cholestenone (cholest-4-en-3-one), an initial step in the cholesterol degradation process. The sequence is that of Cholesterol oxidase from Acinetobacter baumannii.